The following is a 577-amino-acid chain: Aspartate--tRNA(Asp/Asn) ligase (577 aa).

Residue Glu-171 participates in L-aspartate binding. The tract at residues Gln-195–Lys-198 is aspartate. Arg-217 contributes to the L-aspartate binding site. ATP contacts are provided by residues Arg-217–Glu-219 and Gln-226. Residue His-444 participates in L-aspartate binding. Glu-474 contacts ATP. Residue Arg-481 participates in L-aspartate binding. An ATP-binding site is contributed by Gly-526–Arg-529.

The protein belongs to the class-II aminoacyl-tRNA synthetase family. Type 1 subfamily. As to quaternary structure, homodimer.

It is found in the cytoplasm. It carries out the reaction tRNA(Asx) + L-aspartate + ATP = L-aspartyl-tRNA(Asx) + AMP + diphosphate. In terms of biological role, aspartyl-tRNA synthetase with relaxed tRNA specificity since it is able to aspartylate not only its cognate tRNA(Asp) but also tRNA(Asn). Reaction proceeds in two steps: L-aspartate is first activated by ATP to form Asp-AMP and then transferred to the acceptor end of tRNA(Asp/Asn). The protein is Aspartate--tRNA(Asp/Asn) ligase of Helicobacter pylori (strain HPAG1).